Here is a 666-residue protein sequence, read N- to C-terminus: Semaphorin-7A (666 aa).

Residues 1-21 form a disordered region; that stretch reads MTPPPPGRAAPSAPRARVPGP. The first 44 residues, 1–44, serve as a signal peptide directing secretion; the sequence is MTPPPPGRAAPSAPRARVPGPPARLGLPLRLRLLLLLWAAAASA. Low complexity predominate over residues 9–21; that stretch reads AAPSAPRARVPGP. The Sema domain maps to 53–490; it reads RIFAVWKGHV…SQWEVSQVPL (438 aa). Asparagine 105 is a glycosylation site (N-linked (GlcNAc...) asparagine). A disulfide bridge links cysteine 120 with cysteine 126. At arginine 135 the chain carries Asymmetric dimethylarginine. Residues cysteine 143 and cysteine 152 are joined by a disulfide bond. Asparagine 157 and asparagine 258 each carry an N-linked (GlcNAc...) asparagine glycan. Disulfide bonds link cysteine 266/cysteine 366, cysteine 291/cysteine 335, cysteine 493/cysteine 511, cysteine 500/cysteine 541, cysteine 503/cysteine 518, cysteine 566/cysteine 613, and cysteine 587/cysteine 596. The interaction with integrins stretch occupies residues 267–269; it reads RGD. A Cell attachment site motif is present at residues 267-269; it reads RGD. N-linked (GlcNAc...) asparagine glycosylation occurs at asparagine 330. The 86-residue stretch at 544–629 folds into the Ig-like C2-type domain; that stretch reads PKPDKAPLQK…YFREAQHWQL (86 aa). N-linked (GlcNAc...) asparagine glycosylation is present at asparagine 602. Alanine 648 carries GPI-anchor amidated alanine lipidation. A propeptide spans 649–666 (removed in mature form); the sequence is ASLWLGVLPTLTLGLLVH.

The protein belongs to the semaphorin family. In terms of assembly, interacts with ITGA1 and ITGB1. Interacts with PLXNC1. In terms of tissue distribution, detected in skin keratinocytes and on endothelial cells from skin blood vessels (at protein level). Expressed in fibroblasts, keratinocytes, melanocytes, placenta, testis, ovary, spleen, brain, spinal cord, lung, heart, adrenal gland, lymph nodes, thymus, intestine and kidney.

The protein localises to the cell membrane. In terms of biological role, plays an important role in integrin-mediated signaling and functions both in regulating cell migration and immune responses. Promotes formation of focal adhesion complexes, activation of the protein kinase PTK2/FAK1 and subsequent phosphorylation of MAPK1 and MAPK3. Promotes production of pro-inflammatory cytokines by monocytes and macrophages. Plays an important role in modulating inflammation and T-cell-mediated immune responses. Promotes axon growth in the embryonic olfactory bulb. Promotes attachment, spreading and dendrite outgrowth in melanocytes. This Homo sapiens (Human) protein is Semaphorin-7A (SEMA7A).